We begin with the raw amino-acid sequence, 260 residues long: Indole-3-glycerol phosphate synthase (260 aa).

This sequence belongs to the TrpC family.

It catalyses the reaction 1-(2-carboxyphenylamino)-1-deoxy-D-ribulose 5-phosphate + H(+) = (1S,2R)-1-C-(indol-3-yl)glycerol 3-phosphate + CO2 + H2O. Its pathway is amino-acid biosynthesis; L-tryptophan biosynthesis; L-tryptophan from chorismate: step 4/5. The polypeptide is Indole-3-glycerol phosphate synthase (Staphylococcus aureus (strain bovine RF122 / ET3-1)).